Consider the following 225-residue polypeptide: Germin-like protein 3-1 (225 aa).

The signal sequence occupies residues 1-22; the sequence is MRAAVAHRILLSLALFAVLCRC. A disulfide bond links Cys31 and Cys51. A Cupin type-1 domain is found at 65 to 216; sequence SALSRATNPA…AFKITGQDVQ (152 aa). Asn81 is a glycosylation site (N-linked (GlcNAc...) asparagine). Mn(2+)-binding residues include His115, His117, Glu122, and His161.

The protein belongs to the germin family. As to quaternary structure, oligomer (believed to be a pentamer but probably hexamer).

It localises to the secreted. Its subcellular location is the extracellular space. It is found in the apoplast. Functionally, may play a role in plant defense. Probably has no oxalate oxidase activity even if the active site is conserved. The chain is Germin-like protein 3-1 from Oryza sativa subsp. japonica (Rice).